Consider the following 372-residue polypeptide: Glutamate 5-kinase (372 aa).

K14 contributes to the ATP binding site. Substrate is bound by residues S54, D141, and N153. An ATP-binding site is contributed by 173–174 (TD). In terms of domain architecture, PUA spans 280-358 (RGRVVIDGGA…SEIESVLGHL (79 aa)).

Belongs to the glutamate 5-kinase family.

The protein localises to the cytoplasm. It carries out the reaction L-glutamate + ATP = L-glutamyl 5-phosphate + ADP. It functions in the pathway amino-acid biosynthesis; L-proline biosynthesis; L-glutamate 5-semialdehyde from L-glutamate: step 1/2. Functionally, catalyzes the transfer of a phosphate group to glutamate to form L-glutamate 5-phosphate. The sequence is that of Glutamate 5-kinase from Cupriavidus taiwanensis (strain DSM 17343 / BCRC 17206 / CCUG 44338 / CIP 107171 / LMG 19424 / R1) (Ralstonia taiwanensis (strain LMG 19424)).